Consider the following 286-residue polypeptide: Bifunctional protein FolD (286 aa).

Residues 165 to 167 and serine 190 each bind NADP(+); that span reads GRS.

Belongs to the tetrahydrofolate dehydrogenase/cyclohydrolase family. As to quaternary structure, homodimer.

The enzyme catalyses (6R)-5,10-methylene-5,6,7,8-tetrahydrofolate + NADP(+) = (6R)-5,10-methenyltetrahydrofolate + NADPH. It catalyses the reaction (6R)-5,10-methenyltetrahydrofolate + H2O = (6R)-10-formyltetrahydrofolate + H(+). Its pathway is one-carbon metabolism; tetrahydrofolate interconversion. Catalyzes the oxidation of 5,10-methylenetetrahydrofolate to 5,10-methenyltetrahydrofolate and then the hydrolysis of 5,10-methenyltetrahydrofolate to 10-formyltetrahydrofolate. The chain is Bifunctional protein FolD from Staphylococcus aureus (strain MRSA252).